The sequence spans 360 residues: S-adenosylmethionine:tRNA ribosyltransferase-isomerase (360 aa).

It belongs to the QueA family. In terms of assembly, monomer.

It localises to the cytoplasm. The enzyme catalyses 7-aminomethyl-7-carbaguanosine(34) in tRNA + S-adenosyl-L-methionine = epoxyqueuosine(34) in tRNA + adenine + L-methionine + 2 H(+). It functions in the pathway tRNA modification; tRNA-queuosine biosynthesis. Transfers and isomerizes the ribose moiety from AdoMet to the 7-aminomethyl group of 7-deazaguanine (preQ1-tRNA) to give epoxyqueuosine (oQ-tRNA). The protein is S-adenosylmethionine:tRNA ribosyltransferase-isomerase of Burkholderia pseudomallei (strain K96243).